Consider the following 268-residue polypeptide: Unknown seed protein USP (268 aa).

Positions 1–25 (MEFAHLTVLSLFCLAFVGITATSSG) are cleaved as a signal peptide. The 192-residue stretch at 68 to 259 (LFFEHDLHPG…GNKAAAWVPN (192 aa)) folds into the BURP domain.

As to expression, expressed in seeds. Detected only in the embryo. In germinating seedlings, detected in roots, root caps, root hairs, vascular bundle, mesophyll cells and epidermal cells of the cotyledons and the hypocotyl.

The protein localises to the golgi apparatus. The protein resides in the golgi stack. Its subcellular location is the prevacuolar compartment. Its function is as follows. Associated with the protein storage vacuole formation. This is Unknown seed protein USP from Vicia faba (Broad bean).